The sequence spans 761 residues: Phosphoribosylformylglycinamidine synthase subunit PurL (761 aa).

Residue H58 is part of the active site. Positions 61 and 105 each coordinate ATP. E107 serves as a coordination point for Mg(2+). Substrate-binding positions include 108–111 (SHNH) and R130. The active-site Proton acceptor is the H109. A Mg(2+)-binding site is contributed by D131. A substrate-binding site is contributed by Q259. D287 contributes to the Mg(2+) binding site. Residue 331–333 (ESQ) participates in substrate binding. The ATP site is built by N519 and G556. N557 provides a ligand contact to Mg(2+). Position 559 (S559) interacts with substrate.

Belongs to the FGAMS family. As to quaternary structure, monomer. Part of the FGAM synthase complex composed of 1 PurL, 1 PurQ and 2 PurS subunits.

It localises to the cytoplasm. It carries out the reaction N(2)-formyl-N(1)-(5-phospho-beta-D-ribosyl)glycinamide + L-glutamine + ATP + H2O = 2-formamido-N(1)-(5-O-phospho-beta-D-ribosyl)acetamidine + L-glutamate + ADP + phosphate + H(+). Its pathway is purine metabolism; IMP biosynthesis via de novo pathway; 5-amino-1-(5-phospho-D-ribosyl)imidazole from N(2)-formyl-N(1)-(5-phospho-D-ribosyl)glycinamide: step 1/2. In terms of biological role, part of the phosphoribosylformylglycinamidine synthase complex involved in the purines biosynthetic pathway. Catalyzes the ATP-dependent conversion of formylglycinamide ribonucleotide (FGAR) and glutamine to yield formylglycinamidine ribonucleotide (FGAM) and glutamate. The FGAM synthase complex is composed of three subunits. PurQ produces an ammonia molecule by converting glutamine to glutamate. PurL transfers the ammonia molecule to FGAR to form FGAM in an ATP-dependent manner. PurS interacts with PurQ and PurL and is thought to assist in the transfer of the ammonia molecule from PurQ to PurL. The chain is Phosphoribosylformylglycinamidine synthase subunit PurL from Rhodococcus opacus (strain B4).